The sequence spans 210 residues: Small ribosomal subunit protein uS3 (210 aa).

One can recognise a KH type-2 domain in the interval 38–106; sequence IRAWLKKRLA…EVQINIVEIR (69 aa).

Belongs to the universal ribosomal protein uS3 family. As to quaternary structure, part of the 30S ribosomal subunit. Forms a tight complex with proteins S10 and S14.

Binds the lower part of the 30S subunit head. Binds mRNA in the 70S ribosome, positioning it for translation. In Magnetococcus marinus (strain ATCC BAA-1437 / JCM 17883 / MC-1), this protein is Small ribosomal subunit protein uS3.